Consider the following 140-residue polypeptide: Large ribosomal subunit protein uL16 (140 aa).

Residues 1-14 show a composition bias toward basic residues; sequence MLMPKKVKHRKQMK. Residues 1–20 form a disordered region; the sequence is MLMPKKVKHRKQMKGRMSGT.

This sequence belongs to the universal ribosomal protein uL16 family. In terms of assembly, part of the 50S ribosomal subunit.

Binds 23S rRNA and is also seen to make contacts with the A and possibly P site tRNAs. The chain is Large ribosomal subunit protein uL16 from Geotalea daltonii (strain DSM 22248 / JCM 15807 / FRC-32) (Geobacter daltonii).